We begin with the raw amino-acid sequence, 397 residues long: LIM/homeobox protein Lhx9 (397 aa).

LIM zinc-binding domains lie at 69–130 and 131–193; these read ALCA…RFSV and QRCA…LLQG. Disordered stretches follow at residues 248–272, 330–365, and 378–397; these read ENEA…RMRT, ENGG…LTDL, and SNMD…TNLF. A DNA-binding region (homeobox) is located at residues 267-326; that stretch reads TKRMRTSFKHHQLRTMKSYFAINHNPDAKDLKQLAQKTGLTKRVLQVWFQNARAKFRRNL. The span at 353-365 shows a compositional bias: low complexity; that stretch reads LTPPGTATTLTDL. The span at 387–397 shows a compositional bias: polar residues; sequence SPSQTTLTNLF.

Interacts with LDB1 and LDB2. Expressed in the dorsal thalamus and inner nuclei of the cerebellum.

It localises to the nucleus. In terms of biological role, involved in gonadal development. In Mus musculus (Mouse), this protein is LIM/homeobox protein Lhx9 (Lhx9).